Reading from the N-terminus, the 562-residue chain is Calcium-dependent protein kinase 5 (562 aa).

In terms of domain architecture, Protein kinase spans 118-372; the sequence is ELDKYKLGKG…VHKIVNHKWF (255 aa). ATP-binding positions include 124–132 and Lys-147; that span reads LGKGSYGNV. The Proton acceptor role is filled by Asp-238. The J domain autoinhibitory motif signature appears at 394 to 402; the sequence is KFKKFHKLC. A j domain region spans residues 394–429; it reads KFKKFHKLCKIKKLAITCIAYQLNKKKFGKMKKTFE. Residues 403 to 412 carry the J domain EF-hand interaction motif motif; it reads KIKKLAITCI. 4 consecutive EF-hand domains span residues 419-453, 454-489, 490-525, and 528-562; these read KKFG…VGDN, EIDR…HSIL, EQDA…SNDQ, and FSKE…GRQS. Ca(2+)-binding residues include Asp-432, Asn-434, Asp-436, Glu-443, Asp-467, Asp-469, Asn-471, Glu-478, Asp-503, Asn-505, Asp-507, Glu-514, Asp-541, Asn-543, Asp-545, Tyr-547, and Glu-552.

Belongs to the protein kinase superfamily. Ser/Thr protein kinase family. CDPK subfamily. The cofactor is Mg(2+). In terms of processing, may be palmitoylated. Post-translationally, autophosphorylated in vitro.

The protein localises to the cytoplasm. It localises to the cytoplasmic vesicle. It is found in the secretory vesicle. Its subcellular location is the microneme membrane. The protein resides in the cell membrane. The catalysed reaction is L-seryl-[protein] + ATP = O-phospho-L-seryl-[protein] + ADP + H(+). The enzyme catalyses L-threonyl-[protein] + ATP = O-phospho-L-threonyl-[protein] + ADP + H(+). Its activity is regulated as follows. Activated by calcium. Upon calcium binding to the EF-hand domains, the C-terminus of the junction domain (J domain) undergoes a conformational change which results in the dissociation of the pseudo-substrate inhibitory motif from the catalytic domain. This, in turn, may facilitate the autophosphorylation of the activation loop at Thr-278, which leads to the kinase activation. Calcium-dependent protein kinase which acts as a sensor and effector of intracellular Ca(2+) levels probably in part downstream of cGMP-activated PKG kinase. Plays a central role in host erythrocytes and hepatocytes infection cycles. During the liver stage, involved in sporozoite motility and thus in sporozoite invasion of host hepatocytes, probably together with CDPK1 and CDPK4. Involved in merosome egress from host hepatocytes, probably together with CDPK4. Required for the release of hepatic merozoites from merosomes in the host blood stream. During the asexual blood stage, required for merozoite egress from host erythrocytes by triggering microneme secretion. Phosphorylates transporter NPT1 at late schizont stage. This is Calcium-dependent protein kinase 5 from Plasmodium berghei (strain Anka).